The sequence spans 523 residues: GMP synthase [glutamine-hydrolyzing] (523 aa).

One can recognise a Glutamine amidotransferase type-1 domain in the interval 8-205 (KILILDFGSQ…VVDICGCETN (198 aa)). Catalysis depends on cysteine 85, which acts as the Nucleophile. Residues histidine 179 and glutamate 181 contribute to the active site. The GMPS ATP-PPase domain occupies 206–398 (WTAENIIEDA…LGLPAEMLNR (193 aa)). An ATP-binding site is contributed by 233–239 (SGGVDSS).

Homodimer.

The enzyme catalyses XMP + L-glutamine + ATP + H2O = GMP + L-glutamate + AMP + diphosphate + 2 H(+). It functions in the pathway purine metabolism; GMP biosynthesis; GMP from XMP (L-Gln route): step 1/1. Catalyzes the synthesis of GMP from XMP. The sequence is that of GMP synthase [glutamine-hydrolyzing] from Histophilus somni (strain 129Pt) (Haemophilus somnus).